Here is a 270-residue protein sequence, read N- to C-terminus: 4-hydroxy-tetrahydrodipicolinate reductase (270 aa).

NAD(+) contacts are provided by residues 9–14 and glutamate 35; that span reads GAGGRM. Arginine 36 contacts NADP(+). NAD(+) is bound by residues 99 to 101 and 123 to 126; these read GTT and ASNF. Residue histidine 156 is the Proton donor/acceptor of the active site. Position 157 (histidine 157) interacts with (S)-2,3,4,5-tetrahydrodipicolinate. Lysine 160 acts as the Proton donor in catalysis. 166 to 167 is a binding site for (S)-2,3,4,5-tetrahydrodipicolinate; sequence GT.

Belongs to the DapB family.

It is found in the cytoplasm. The catalysed reaction is (S)-2,3,4,5-tetrahydrodipicolinate + NAD(+) + H2O = (2S,4S)-4-hydroxy-2,3,4,5-tetrahydrodipicolinate + NADH + H(+). It catalyses the reaction (S)-2,3,4,5-tetrahydrodipicolinate + NADP(+) + H2O = (2S,4S)-4-hydroxy-2,3,4,5-tetrahydrodipicolinate + NADPH + H(+). The protein operates within amino-acid biosynthesis; L-lysine biosynthesis via DAP pathway; (S)-tetrahydrodipicolinate from L-aspartate: step 4/4. Functionally, catalyzes the conversion of 4-hydroxy-tetrahydrodipicolinate (HTPA) to tetrahydrodipicolinate. This chain is 4-hydroxy-tetrahydrodipicolinate reductase, found in Haemophilus influenzae (strain PittGG).